The chain runs to 707 residues: Polyribonucleotide nucleotidyltransferase (707 aa).

Residues Asp486 and Asp492 each coordinate Mg(2+). In terms of domain architecture, KH spans Pro553–Ile612. The region spanning Gly622–Lys690 is the S1 motif domain.

Belongs to the polyribonucleotide nucleotidyltransferase family. In terms of assembly, component of the RNA degradosome, which is a multiprotein complex involved in RNA processing and mRNA degradation. The cofactor is Mg(2+).

The protein resides in the cytoplasm. The catalysed reaction is RNA(n+1) + phosphate = RNA(n) + a ribonucleoside 5'-diphosphate. Functionally, involved in mRNA degradation. Catalyzes the phosphorolysis of single-stranded polyribonucleotides processively in the 3'- to 5'-direction. In Edwardsiella ictaluri (strain 93-146), this protein is Polyribonucleotide nucleotidyltransferase.